The following is a 1551-amino-acid chain: Dual oxidase 1 (1551 aa).

Positions 1–21 are cleaved as a signal peptide; that stretch reads MAVYSAVAWILLFGVLASLGA. At 22 to 596 the chain is on the extracellular side; it reads QNPVSWEVQR…YFKGSGFGFG (575 aa). The tract at residues 26 to 593 is peroxidase-like; mediates peroxidase activity; the sequence is SWEVQRFDGW…VRDYFKGSGF (568 aa). N-linked (GlcNAc...) asparagine glycosylation is found at asparagine 94, asparagine 342, asparagine 354, asparagine 461, and asparagine 534. A helical membrane pass occupies residues 597 to 617; that stretch reads LTIGTLCCFPLVSLLSAWIVA. Residues 618–1044 are Cytoplasmic-facing; it reads RLRMRNFKRL…KRFIENYRRH (427 aa). EF-hand domains are found at residues 815 to 850, 851 to 886, and 895 to 930; these read PQDM…FMKG, SPEE…FIEI, and QLAE…HDSD. 9 residues coordinate Ca(2+): aspartate 828, aspartate 830, asparagine 832, tyrosine 834, glutamate 839, aspartate 864, aspartate 866, asparagine 868, and glutamate 875. The tract at residues 956–1248 is interaction with TXNDC11; that stretch reads YISQEKICPS…GSFALIQMPR (293 aa). A helical membrane pass occupies residues 1045-1065; it reads IGCVAVFYTITGALFLERAYY. Residues 1066-1080 are Extracellular-facing; that stretch reads YAFAAHHSGITDTTR. A helical transmembrane segment spans residues 1081-1101; it reads VGIILSRGTAASISFMFSYIL. Residues 1087–1269 enclose the Ferric oxidoreductase domain; that stretch reads RGTAASISFM…YVGDKLVSLS (183 aa). Residues 1102-1136 lie on the Cytoplasmic side of the membrane; the sequence is LTMCRNLITFLRETFLNRYIPFDAAVDFHRFIAST. The chain crosses the membrane as a helical span at residues 1137–1157; it reads AIILTVLHSAGHVVNVYLFSI. Residues 1158–1188 are Extracellular-facing; sequence SPLSVLSCLFPDLFHDDGSEFPQKYYWWFFQ. A helical membrane pass occupies residues 1189–1209; sequence TVPGLTGVLLLLALAIMYVFA. The Cytoplasmic portion of the chain corresponds to 1210-1226; that stretch reads SHHFRRRSFRGFWLTHH. A helical membrane pass occupies residues 1227 to 1247; that stretch reads LYIFLYILLIIHGSFALIQMP. Arginine 1248 is a topological domain (extracellular). A helical membrane pass occupies residues 1249–1269; it reads FHIFFLVPAIIYVGDKLVSLS. The region spanning 1270-1376 is the FAD-binding FR-type domain; sequence RKKVEISVVK…DGPFGEGHQE (107 aa). The Cytoplasmic segment spans residues 1270 to 1551; it reads RKKVEISVVK…THFSHHYENF (282 aa).

It in the N-terminal section; belongs to the peroxidase family. Interacts with TXNDC11, TPO and CYBA. N-glycosylated. In terms of tissue distribution, expressed in thyrocytes (at protein level).

It localises to the apical cell membrane. It catalyses the reaction NADH + O2 + H(+) = H2O2 + NAD(+). The enzyme catalyses NADPH + O2 + H(+) = H2O2 + NADP(+). The protein operates within hormone biosynthesis; thyroid hormone biosynthesis. The NADPH oxidase activity is calcium-dependent. Peroxidase activity is inhibited by aminobenzohydrazide. Functionally, generates hydrogen peroxide which is required for the activity of thyroid peroxidase/TPO and lactoperoxidase/LPO. Plays a role in thyroid hormones synthesis and lactoperoxidase-mediated antimicrobial defense at the surface of mucosa. May have its own peroxidase activity through its N-terminal peroxidase-like domain. This chain is Dual oxidase 1 (Duox1), found in Rattus norvegicus (Rat).